The sequence spans 269 residues: GTP cyclohydrolase FolE2 1 (269 aa).

Belongs to the GTP cyclohydrolase IV family.

It carries out the reaction GTP + H2O = 7,8-dihydroneopterin 3'-triphosphate + formate + H(+). It participates in cofactor biosynthesis; 7,8-dihydroneopterin triphosphate biosynthesis; 7,8-dihydroneopterin triphosphate from GTP: step 1/1. Its function is as follows. Converts GTP to 7,8-dihydroneopterin triphosphate. The protein is GTP cyclohydrolase FolE2 1 of Burkholderia cenocepacia (strain HI2424).